The chain runs to 44 residues: Photosystem I reaction center subunit IX (44 aa).

Residues 7–27 (YLSVAPVLTTLWFGSLAGLLI) traverse the membrane as a helical segment.

The protein belongs to the PsaJ family.

It is found in the plastid. The protein localises to the chloroplast thylakoid membrane. Its function is as follows. May help in the organization of the PsaE and PsaF subunits. The protein is Photosystem I reaction center subunit IX of Liriodendron tulipifera (Tuliptree).